A 134-amino-acid polypeptide reads, in one-letter code: Large ribosomal subunit protein eL14y (134 aa).

Belongs to the eukaryotic ribosomal protein eL14 family.

The protein is Large ribosomal subunit protein eL14y (RPL14B) of Arabidopsis thaliana (Mouse-ear cress).